Consider the following 278-residue polypeptide: Putative phosphatase MG265 (278 aa).

The active-site Nucleophile is D9. Mg(2+) is bound at residue D9. L10 contacts phosphate. Residue D11 participates in Mg(2+) binding. Residues 43–44 and K204 each bind phosphate; that span reads SG. Mg(2+) is bound at residue D227. Phosphate is bound at residue N230.

Belongs to the HAD-like hydrolase superfamily. Cof family. The cofactor is Mg(2+).

The protein is Putative phosphatase MG265 of Mycoplasma genitalium (strain ATCC 33530 / DSM 19775 / NCTC 10195 / G37) (Mycoplasmoides genitalium).